Consider the following 82-residue polypeptide: Delta-actitoxin-Aeq2b 2 (82 aa).

An N-terminal signal peptide occupies residues 1–19; the sequence is MNRLMILVFAAVFLALASA. Positions 20–26 are excised as a propeptide; that stretch reads DEDVDIA. Disulfide bonds link Cys32/Cys79, Cys34/Cys69, and Cys62/Cys80.

It belongs to the sea anemone sodium channel inhibitory toxin family. Type I subfamily.

The protein resides in the secreted. The protein localises to the nematocyst. In terms of biological role, binds specifically to voltage-gated sodium channels (Nav), thereby delaying their inactivation during signal transduction. Causes death to crabs. In Actinia equina (Beadlet anemone), this protein is Delta-actitoxin-Aeq2b 2.